We begin with the raw amino-acid sequence, 144 residues long: Snaclec trimecetin subunit beta (144 aa).

Positions 1–23 (MGRFIFVSFGLLVVFLSLSGTAA) are cleaved as a signal peptide. Disulfide bonds link cysteine 25-cysteine 36, cysteine 53-cysteine 142, and cysteine 119-cysteine 134. The C-type lectin domain maps to 32–143 (FRRYCYQVFQ…CSSKRYVVCK (112 aa)).

Belongs to the snaclec family. In terms of assembly, heterodimer of subunits alpha and beta; disulfide-linked. In terms of tissue distribution, expressed by the venom gland.

The protein localises to the secreted. In terms of biological role, snaclec that induces platelet aggregation in either human platelet rich plasma (PRP) or washed platelet suspensions. It causes aggregation in a dose-dependent manner even in the absence of various platelet agonists such as ADP or von Willebrand factor (vWF). Interestingly, it does not induce aggregation in rabbit PRP. A monoclonal antibody against the platelet GPIb receptor blocks the aggregation induced by trimecetin, suggesting that it acts by binding to GPIb (GP1BA/GP1BB). This Protobothrops mucrosquamatus (Taiwan habu) protein is Snaclec trimecetin subunit beta.